The primary structure comprises 357 residues: UDP-N-acetylglucosamine--N-acetylmuramyl-(pentapeptide) pyrophosphoryl-undecaprenol N-acetylglucosamine transferase (357 aa).

Residues 14 to 16 (TGG), Asn126, Arg162, Ser190, Ile246, 265 to 270 (ALTVCE), and Gln290 contribute to the UDP-N-acetyl-alpha-D-glucosamine site.

The protein belongs to the glycosyltransferase 28 family. MurG subfamily.

It is found in the cell inner membrane. It carries out the reaction di-trans,octa-cis-undecaprenyl diphospho-N-acetyl-alpha-D-muramoyl-L-alanyl-D-glutamyl-meso-2,6-diaminopimeloyl-D-alanyl-D-alanine + UDP-N-acetyl-alpha-D-glucosamine = di-trans,octa-cis-undecaprenyl diphospho-[N-acetyl-alpha-D-glucosaminyl-(1-&gt;4)]-N-acetyl-alpha-D-muramoyl-L-alanyl-D-glutamyl-meso-2,6-diaminopimeloyl-D-alanyl-D-alanine + UDP + H(+). It participates in cell wall biogenesis; peptidoglycan biosynthesis. Functionally, cell wall formation. Catalyzes the transfer of a GlcNAc subunit on undecaprenyl-pyrophosphoryl-MurNAc-pentapeptide (lipid intermediate I) to form undecaprenyl-pyrophosphoryl-MurNAc-(pentapeptide)GlcNAc (lipid intermediate II). This chain is UDP-N-acetylglucosamine--N-acetylmuramyl-(pentapeptide) pyrophosphoryl-undecaprenol N-acetylglucosamine transferase, found in Histophilus somni (strain 129Pt) (Haemophilus somnus).